A 603-amino-acid chain; its full sequence is Sabinene hydrate synthase, chloroplastic (603 aa).

Residues 1–47 constitute a chloroplast transit peptide; sequence MSTISINHVGLLRNPLHGKSKRASINKSWSLCLPRSSSASRLVKPCR. Mn(2+) is bound by residues Asp357 and Asp361. The DDXXD motif motif lies at 357–361; the sequence is DDVYD. Homodimerization regions lie at residues 363 to 369 and 435 to 472; these read YGTLDEL and EAEWYESGYAPSLEEYLSIASISIGVIPIVIPLEVSIP. Residues Asp501 and Glu509 each contribute to the Mn(2+) site.

This sequence belongs to the terpene synthase family. Homodimer. Mn(2+) is required as a cofactor. Mg(2+) serves as cofactor.

The protein resides in the plastid. Its subcellular location is the chloroplast. It catalyses the reaction (2E)-geranyl diphosphate + H2O = sabinene hydrate + diphosphate. Its pathway is secondary metabolite biosynthesis; terpenoid biosynthesis. Functionally, involved in the biosynthesis of phenolic monoterpenes natural products. Monoterpene synthase which catalyzes the conversion of geranyl diphosphate (GPP) to sabinene hydrate, mainly (Z)-sabinene hydrate and to a lower extent (E)-sabinene hydrate, and the formation of minor amounts and traces of several other monoterpenes (e.g. mainly alpha-thujene, alpha-pinene and myrcene). The polypeptide is Sabinene hydrate synthase, chloroplastic (Thymus vulgaris (Thyme)).